The chain runs to 128 residues: Holo-[acyl-carrier-protein] synthase (128 aa).

Mg(2+) is bound by residues Asp-9 and Glu-56.

This sequence belongs to the P-Pant transferase superfamily. AcpS family. Requires Mg(2+) as cofactor.

It localises to the cytoplasm. The catalysed reaction is apo-[ACP] + CoA = holo-[ACP] + adenosine 3',5'-bisphosphate + H(+). Functionally, transfers the 4'-phosphopantetheine moiety from coenzyme A to a Ser of acyl-carrier-protein. The chain is Holo-[acyl-carrier-protein] synthase from Pelagibacter ubique (strain HTCC1062).